A 91-amino-acid chain; its full sequence is MAKQTTMKNAALKQLTKDADEILHLIKVQLDNLTLPSCPLYEEVLDTQMFGLQKEVDFAVKLGLVDREDGKQIMLRLEKELSKLHEAFTLV.

This sequence belongs to the UPF0358 family.

This Staphylococcus aureus (strain bovine RF122 / ET3-1) protein is UPF0358 protein SAB0977.